The chain runs to 365 residues: Flagellar P-ring protein (365 aa).

The N-terminal stretch at 1-21 (MIKRIISIVFLLLTLPQLALA) is a signal peptide.

It belongs to the FlgI family. As to quaternary structure, the basal body constitutes a major portion of the flagellar organelle and consists of four rings (L,P,S, and M) mounted on a central rod.

It is found in the periplasm. It localises to the bacterial flagellum basal body. Assembles around the rod to form the L-ring and probably protects the motor/basal body from shearing forces during rotation. This Geobacter metallireducens (strain ATCC 53774 / DSM 7210 / GS-15) protein is Flagellar P-ring protein.